The following is a 732-amino-acid chain: Protein FAR1-RELATED SEQUENCE 4 (732 aa).

An FAR1 domain is found at 11–97; that stretch reads LFYKDYAKSV…VKEHNHDLLP (87 aa). The 97-residue stretch at 212–308 folds into the MULE domain; sequence VVSFETSYFV…CLWHVLDQLP (97 aa). An SWIM-type zinc finger spans residues 490–526; the sequence is YLVDWDEFKSDIYCSCRSFEYKGYLCRHAIVVLQMSG. The interval 623–683 is disordered; the sequence is QEENQYGSTS…ETVGEGSQEG (61 aa). Positions 624 to 635 are enriched in polar residues; that stretch reads EENQYGSTSTQI.

The protein belongs to the FHY3/FAR1 family. Expressed in hypocotyls, rosette and cauline leaves, inflorescences stems, flowers and siliques.

It is found in the nucleus. In terms of biological role, putative transcription activator involved in regulating light control of development. This Arabidopsis thaliana (Mouse-ear cress) protein is Protein FAR1-RELATED SEQUENCE 4 (FRS4).